Reading from the N-terminus, the 622-residue chain is Probable potassium transport system protein Kup 1 (622 aa).

Helical transmembrane passes span 11 to 31 (LTLGAIGVVYGDIGTSVLYAV), 50 to 70 (ILSIFFWTLTIIVSLKYVTLV), 101 to 121 (VLLLVGIFGTCLFYGDGVITP), 137 to 157 (PAFNKFVIPLTLLVLFGLFWV), 168 to 188 (FFGPITVVWFACIAVLGVAQI), 215 to 235 (FIILGAVVLCVTGAEALYADL), 247 to 267 (WFAVVMPALTLNYFGQGALLL), 285 to 305 (ALLPLVGLATLATVIASQALI), 337 to 357 (IYLPFVNWGLFVTIVLAVMIF), 366 to 386 (AYGIAVCTDMLITTILTFFVI), 393 to 413 (PLWLCVAATSFFFVVDFAFWA), and 419 to 439 (LFDGGWFPLLIGGAIFILMIT).

It belongs to the HAK/KUP transporter (TC 2.A.72) family.

It localises to the cell inner membrane. The enzyme catalyses K(+)(in) + H(+)(in) = K(+)(out) + H(+)(out). In terms of biological role, transport of potassium into the cell. Likely operates as a K(+):H(+) symporter. This chain is Probable potassium transport system protein Kup 1, found in Albidiferax ferrireducens (strain ATCC BAA-621 / DSM 15236 / T118) (Rhodoferax ferrireducens).